The following is a 67-amino-acid chain: Probable Sec-independent protein translocase protein TatE (67 aa).

The helical transmembrane segment at 1–21 (MEGISIAKLLIIGALIVLLFG) threads the bilayer. A disordered region spans residues 46 to 67 (EDTSATRTTAEDVPAERVVHKD).

It belongs to the TatA/E family. TatE subfamily.

It localises to the cell inner membrane. Part of the twin-arginine translocation (Tat) system that transports large folded proteins containing a characteristic twin-arginine motif in their signal peptide across membranes. TatE shares overlapping functions with TatA. In Pantoea vagans (strain C9-1) (Pantoea agglomerans (strain C9-1)), this protein is Probable Sec-independent protein translocase protein TatE.